A 336-amino-acid chain; its full sequence is Potassium channel subfamily K member 1 (336 aa).

Over 1-20 the chain is Cytoplasmic; the sequence is MLQSLAGSSCVRLVERHRSA. A helical transmembrane segment spans residues 21–41; that stretch reads WCFGFLVLGYLLYLVFGAVVF. Over 42–103 the chain is Extracellular; sequence SSVELPYEDL…SNASGNWNWD (62 aa). N95 carries an N-linked (GlcNAc...) asparagine glycan. Positions 104–116 form an intramembrane region, helical; it reads FTSALFFASTVLS. The stretch at 117 to 122 is an intramembrane region; it reads TTGYGH. The selectivity filter 1 stretch occupies residues 117–122; sequence TTGYGH. The Extracellular segment spans residues 123–132; sequence TVPLSDGGKA. Residues 133-156 traverse the membrane as a helical segment; sequence FCIIYSVIGIPFTLLFLTAVVQRV. Over 157-181 the chain is Cytoplasmic; sequence TIHVTRRPVLYFHVRWGFSKQAVAI. The helical transmembrane segment at 182-202 threads the bilayer; sequence VHAVLLGVVTVSCFFFIPAAV. Residues 203-211 lie on the Extracellular side of the membrane; sequence FSVLEDDWN. The segment at residues 212 to 224 is an intramembrane region (helical); the sequence is FLESFYFCFISLS. Residues 225 to 230 are selectivity filter 2; that stretch reads TIGLGD. The stretch at 225–231 is an intramembrane region; sequence TIGLGDY. The Extracellular portion of the chain corresponds to 232-243; it reads VPGEGYNQKFRE. Residues 244–267 traverse the membrane as a helical segment; the sequence is LYKIGITCYLLLGLIAMLVVLETF. At 268-336 the chain is on the cytoplasmic side; it reads CELHELKKFR…PALADGASDH (69 aa). Residue K274 forms a Glycyl lysine isopeptide (Lys-Gly) (interchain with G-Cter in SUMO) linkage. Residues 293–299 are important for intracellular retention in recycling endosomes; sequence IIEHDQL. The tract at residues 307–336 is disordered; sequence QAAGVQEDQKQNEPFVSPQPPALADGASDH.

Belongs to the two pore domain potassium channel (TC 1.A.1.8) family. Homodimer; disulfide-linked. Heterodimer with KCNK2; disulfide-linked. In astrocytes, forms mostly heterodimeric potassium channels with KCNK2, with only a minor proportion of functional channels containing homodimeric KCNK1. Interacts with KCNK3 and KCNK9, forming functional heterodimeric channels. Interacts with GNG4. Identified in a complex with PSD and ARF6; interacts only with PSD that is bound to ARF6. Interacts with UBE2I. In terms of processing, sumoylation is controversial. Sumoylated by UBE2I. Not sumoylated when expressed in xenopus oocytes or mammalian cells. Sumoylation inactivates the channel, but does not interfere with expression at the cell membrane. Sumoylation of a single subunit is sufficient to silence the dimeric channel. Sumoylation of KCNK1 is sufficient to silence heterodimeric channels formed by KCNK1 and KCNK3 or KCNK9. Desumoylated by SENP1; this activates the channel. Desumoylated by SENP1; this strongly increases halothane-mediated activation of heterodimeric channels formed with KCNK9. SENP1 treatment has no effect.

Its subcellular location is the cell membrane. The protein localises to the recycling endosome. It is found in the synaptic cell membrane. The protein resides in the cytoplasmic vesicle. It localises to the perikaryon. Its subcellular location is the cell projection. The protein localises to the dendrite. It is found in the apical cell membrane. The enzyme catalyses K(+)(in) = K(+)(out). It carries out the reaction NH4(+)(in) = NH4(+)(out). The catalysed reaction is Na(+)(in) = Na(+)(out). It catalyses the reaction Rb(+)(in) = Rb(+)(out). The enzyme catalyses Cs(+)(in) = Cs(+)(out). It carries out the reaction Li(+)(in) = Li(+)(out). The catalysed reaction is L-glutamate(out) = L-glutamate(in). It catalyses the reaction chloride(in) = chloride(out). Ion channel that contributes to passive transmembrane potassium transport and to the regulation of the resting membrane potential in brain astrocytes, but also in kidney and in other tissues. Forms dimeric channels through which potassium ions pass in accordance with their electrochemical gradient. The channel is selective for K(+) ions at physiological potassium concentrations and at neutral pH, but becomes permeable to Na(+) at subphysiological K(+) levels and upon acidification of the extracellular medium. The homodimer has very low potassium channel activity, when expressed in heterologous systems, and can function as weakly inward rectifying potassium channel. Channel activity is modulated by activation of serotonin receptors. Heterodimeric channels containing KCNK1 and KCNK2 have much higher activity, and may represent the predominant form in astrocytes. Heterodimeric channels containing KCNK1 and KCNK3 or KCNK9 have much higher activity. Heterodimeric channels formed by KCNK1 and KCNK9 may contribute to halothane-sensitive currents. Mediates outward rectifying potassium currents in dentate gyrus granule cells and contributes to the regulation of their resting membrane potential. Contributes to the regulation of action potential firing in dentate gyrus granule cells and down-regulates their intrinsic excitability. In astrocytes, the heterodimer formed by KCNK1 and KCNK2 is required for rapid glutamate release in response to activation of G-protein coupled receptors, such as F2R and CNR1. Required for normal ion and water transport in the kidney. Contributes to the regulation of the resting membrane potential of pancreatic beta cells. The low channel activity of homodimeric KCNK1 may be due to sumoylation. The low channel activity may be due to rapid internalization from the cell membrane and retention in recycling endosomes. Permeable to monovalent cations with ion selectivity for K(+) &gt; Rb(+) &gt;&gt; NH4(+) &gt;&gt; Cs(+) = Na(+) = Li(+). This Bos taurus (Bovine) protein is Potassium channel subfamily K member 1.